The primary structure comprises 796 residues: ER degradation-enhancing alpha-mannosidase-like protein 1 (796 aa).

An N-terminal signal peptide occupies residues 1-20 (MVCCLWVLLALLLHLDHVAC). N86 carries an N-linked (GlcNAc...) asparagine glycan. The Proton donor role is filled by E372. T495 is a Ca(2+) binding site. N-linked (GlcNAc...) asparagine glycans are attached at residues N517, N672, and N762.

The protein belongs to the glycosyl hydrolase 47 family. As to quaternary structure, interacts with PDI1. Ca(2+) serves as cofactor.

The protein resides in the endoplasmic reticulum lumen. The enzyme catalyses Hydrolysis of terminal, non-reducing alpha-D-mannose residues in alpha-D-mannosides.. It participates in protein modification; protein glycosylation. Alpha-1,2-specific exomannosidase involved in endoplasmic reticulum-associated degradation (ERAD). Delivers misfolded glycoproteins to proteasomes. Forms a complex with PDI1 to process unfolded protein-bound Man8GlcNAc2 oligosaccharides to Man7GlcNAc2, promoting degradation in unfolded protein response. The sequence is that of ER degradation-enhancing alpha-mannosidase-like protein 1 (MNL1) from Saccharomyces cerevisiae (strain ATCC 204508 / S288c) (Baker's yeast).